A 600-amino-acid polypeptide reads, in one-letter code: Elongation factor 4 (600 aa).

A tr-type G domain is found at 4-186 (SKIRNFSIIA…AIVDKIPPPS (183 aa)). GTP-binding positions include 16 to 21 (DHGKST) and 133 to 136 (NKID).

Belongs to the TRAFAC class translation factor GTPase superfamily. Classic translation factor GTPase family. LepA subfamily.

It is found in the cell membrane. The catalysed reaction is GTP + H2O = GDP + phosphate + H(+). Its function is as follows. Required for accurate and efficient protein synthesis under certain stress conditions. May act as a fidelity factor of the translation reaction, by catalyzing a one-codon backward translocation of tRNAs on improperly translocated ribosomes. Back-translocation proceeds from a post-translocation (POST) complex to a pre-translocation (PRE) complex, thus giving elongation factor G a second chance to translocate the tRNAs correctly. Binds to ribosomes in a GTP-dependent manner. The polypeptide is Elongation factor 4 (Mycoplasma capricolum subsp. capricolum (strain California kid / ATCC 27343 / NCTC 10154)).